A 515-amino-acid chain; its full sequence is Maturase K (515 aa).

This sequence belongs to the intron maturase 2 family. MatK subfamily.

The protein resides in the plastid. Its subcellular location is the chloroplast. In terms of biological role, usually encoded in the trnK tRNA gene intron. Probably assists in splicing its own and other chloroplast group II introns. The chain is Maturase K from Alpinia zerumbet (Shell ginger).